The following is a 229-amino-acid chain: ATP synthase subunit a (229 aa).

6 helical membrane passes run 14–34 (LIAI…ALIL), 68–88 (YFPF…LGLF), 98–118 (IVVT…GGLW), 124–144 (FLSI…LVLI), 157–179 (GVRL…GFGF), and 189–209 (NIFP…VAVI).

This sequence belongs to the ATPase A chain family. In terms of assembly, F-type ATPases have 2 components, CF(1) - the catalytic core - and CF(0) - the membrane proton channel. CF(1) has five subunits: alpha(3), beta(3), gamma(1), delta(1), epsilon(1). CF(0) has three main subunits: a, b and c.

It is found in the mitochondrion inner membrane. In terms of biological role, mitochondrial membrane ATP synthase (F(1)F(0) ATP synthase or Complex V) produces ATP from ADP in the presence of a proton gradient across the membrane which is generated by electron transport complexes of the respiratory chain. F-type ATPases consist of two structural domains, F(1) - containing the extramembraneous catalytic core and F(0) - containing the membrane proton channel, linked together by a central stalk and a peripheral stalk. During catalysis, ATP synthesis in the catalytic domain of F(1) is coupled via a rotary mechanism of the central stalk subunits to proton translocation. Key component of the proton channel; it may play a direct role in the translocation of protons across the membrane. The chain is ATP synthase subunit a (ATPASE6) from Metridium senile (Brown sea anemone).